The following is a 309-amino-acid chain: Probable nitrogen assimilation transcriptional activator (309 aa).

Residues 1–57 (MRLEQLQAALRVAETGSFQEAAQKVGCNQSTISRQVKGLEDELGIALFRRQGRMKLT) form the HTH lysR-type domain. The segment at residues 18–37 (FQEAAQKVGCNQSTISRQVK) is a DNA-binding region (H-T-H motif).

This sequence belongs to the LysR transcriptional regulatory family.

Seems to regulate utilization of fixed nitrogen by controlling the expression of a certain gene(s) involved in nitrogen metabolism. This is Probable nitrogen assimilation transcriptional activator (ntcB) from Synechococcus elongatus (strain ATCC 33912 / PCC 7942 / FACHB-805) (Anacystis nidulans R2).